A 152-amino-acid chain; its full sequence is Prostaglandin E synthase (152 aa).

The Lumenal portion of the chain corresponds to 1–12 (MPAHSLVMSSPA). The chain crosses the membrane as a helical span at residues 13 to 41 (LPAFLLCSTLLVIKMYVVAIITGQVRLRK). Arginine 38 lines the glutathione pocket. Over 42 to 60 (KAFANPEDALRHGGPQYCR) the chain is Cytoplasmic. A helical membrane pass occupies residues 61-90 (SDPDVERCLRAHRNDMETIYPFLFLGFVYS). 73-77 (RNDME) contributes to the glutathione binding site. Residues 91–95 (FLGPN) are Lumenal-facing. The helical transmembrane segment at 96-119 (PFVAWMHFLVFLVGRVAHTVAYLG) threads the bilayer. Positions 113 and 117 each coordinate glutathione. Topologically, residues 120 to 123 (KLRA) are cytoplasmic. The helical transmembrane segment at 124 to 152 (PIRSVTYTLAQLPCASMALQILWEAARHL) threads the bilayer. 126–130 (RSVTY) lines the glutathione pocket.

This sequence belongs to the MAPEG family. As to quaternary structure, homotrimer. The cofactor is glutathione.

Its subcellular location is the membrane. The protein localises to the cytoplasm. It localises to the perinuclear region. The catalysed reaction is prostaglandin H2 = prostaglandin E2. It catalyses the reaction 2-glyceryl-prostaglandin H2 = 2-glyceryl-prostaglandin E2. The enzyme catalyses prostaglandin G2 = (15S)-15-hydroperoxy-prostaglandin E2. It carries out the reaction 1-chloro-2,4-dinitrobenzene + glutathione = 2,4-dinitrophenyl-S-glutathione + chloride + H(+). The catalysed reaction is (5S)-hydroperoxy-(6E,8Z,11Z,14Z)-eicosatetraenoate + 2 glutathione = (5S)-hydroxy-(6E,8Z,11Z,14Z)-eicosatetraenoate + glutathione disulfide + H2O. It participates in lipid metabolism; prostaglandin biosynthesis. With respect to regulation, induced by interleukin IL1B. Functionally, terminal enzyme of the cyclooxygenase (COX)-2-mediated prostaglandin E2 (PGE2) biosynthetic pathway. Catalyzes the glutathione-dependent oxidoreduction of prostaglandin endoperoxide H2 (PGH2) to prostaglandin E2 (PGE2) in response to inflammatory stimuli. Plays a key role in inflammation response, fever and pain. Also catalyzes the oxidoreduction of endocannabinoids into prostaglandin glycerol esters and PGG2 into 15-hydroperoxy-PGE2. In addition, displays low glutathione transferase and glutathione-dependent peroxidase activities, toward 1-chloro-2,4-dinitrobenzene and 5-hydroperoxyicosatetraenoic acid (5-HPETE), respectively. The chain is Prostaglandin E synthase (PTGES) from Homo sapiens (Human).